The following is a 569-amino-acid chain: Dihydroorotate dehydrogenase (quinone), mitochondrial (569 aa).

Residues 1 to 23 constitute a mitochondrion transit peptide; that stretch reads MISKLKPQFMFLPKKHILSYCRK. Residues 143-163 form a helical membrane-spanning segment; sequence IIFLLFVSLFGLYGFFESYNP. Residues 225–229 and T249 each bind FMN; that span reads AGFDK. K229 lines the substrate pocket. Substrate is bound by residues 274-278 and N342; that span reads NSCGF. Residue N342 participates in FMN binding. S345 acts as the Nucleophile in catalysis. N347 lines the substrate pocket. K429 is a binding site for FMN. 458–459 is a substrate binding site; that stretch reads NT. FMN is bound by residues 477–478, 505–507, and 528–529; these read SG, SGG, and YS.

It belongs to the dihydroorotate dehydrogenase family. Type 2 subfamily. As to quaternary structure, monomer. Requires FMN as cofactor.

Its subcellular location is the mitochondrion inner membrane. The catalysed reaction is (S)-dihydroorotate + a quinone = orotate + a quinol. The protein operates within pyrimidine metabolism; UMP biosynthesis via de novo pathway; orotate from (S)-dihydroorotate (quinone route): step 1/1. Functionally, catalyzes the conversion of dihydroorotate to orotate with quinone as electron acceptor. The protein is Dihydroorotate dehydrogenase (quinone), mitochondrial of Plasmodium falciparum (isolate 3D7).